Consider the following 277-residue polypeptide: Shikimate dehydrogenase (NADP(+)) (277 aa).

Shikimate-binding positions include 18–20 (SKS) and threonine 65. The active-site Proton acceptor is the lysine 69. Residue glutamate 81 participates in NADP(+) binding. 2 residues coordinate shikimate: asparagine 90 and aspartate 106. NADP(+) is bound by residues 130 to 134 (GAGGA), 154 to 159 (NRTFSK), and methionine 217. Tyrosine 219 provides a ligand contact to shikimate. Residue glycine 241 participates in NADP(+) binding.

The protein belongs to the shikimate dehydrogenase family. Homodimer.

The enzyme catalyses shikimate + NADP(+) = 3-dehydroshikimate + NADPH + H(+). It functions in the pathway metabolic intermediate biosynthesis; chorismate biosynthesis; chorismate from D-erythrose 4-phosphate and phosphoenolpyruvate: step 4/7. In terms of biological role, involved in the biosynthesis of the chorismate, which leads to the biosynthesis of aromatic amino acids. Catalyzes the reversible NADPH linked reduction of 3-dehydroshikimate (DHSA) to yield shikimate (SA). This Vibrio parahaemolyticus serotype O3:K6 (strain RIMD 2210633) protein is Shikimate dehydrogenase (NADP(+)).